The primary structure comprises 210 residues: Probable GTP-binding protein EngB (210 aa).

The EngB-type G domain occupies 25–199 (TGIEVAFAGR…RQKLDSWFNE (175 aa)). GTP-binding positions include 33–40 (GRSNAGKS), 60–64 (GRTQL), 78–81 (DLPG), 145–148 (TKAD), and 178–180 (FSS). Residues Ser-40 and Thr-62 each coordinate Mg(2+).

This sequence belongs to the TRAFAC class TrmE-Era-EngA-EngB-Septin-like GTPase superfamily. EngB GTPase family. Requires Mg(2+) as cofactor.

Its function is as follows. Necessary for normal cell division and for the maintenance of normal septation. The polypeptide is Probable GTP-binding protein EngB (Klebsiella pneumoniae (strain 342)).